A 441-amino-acid chain; its full sequence is Histidine--tRNA ligase (441 aa).

Belongs to the class-II aminoacyl-tRNA synthetase family. Homodimer.

The protein localises to the cytoplasm. It catalyses the reaction tRNA(His) + L-histidine + ATP = L-histidyl-tRNA(His) + AMP + diphosphate + H(+). In Koribacter versatilis (strain Ellin345), this protein is Histidine--tRNA ligase.